Consider the following 139-residue polypeptide: Putative pre-16S rRNA nuclease (139 aa).

This sequence belongs to the YqgF nuclease family.

It is found in the cytoplasm. In terms of biological role, could be a nuclease involved in processing of the 5'-end of pre-16S rRNA. The sequence is that of Putative pre-16S rRNA nuclease from Phocaeicola vulgatus (strain ATCC 8482 / DSM 1447 / JCM 5826 / CCUG 4940 / NBRC 14291 / NCTC 11154) (Bacteroides vulgatus).